Consider the following 100-residue polypeptide: Aspartyl/glutamyl-tRNA(Asn/Gln) amidotransferase subunit C (100 aa).

It belongs to the GatC family. As to quaternary structure, heterotrimer of A, B and C subunits.

The catalysed reaction is L-glutamyl-tRNA(Gln) + L-glutamine + ATP + H2O = L-glutaminyl-tRNA(Gln) + L-glutamate + ADP + phosphate + H(+). It carries out the reaction L-aspartyl-tRNA(Asn) + L-glutamine + ATP + H2O = L-asparaginyl-tRNA(Asn) + L-glutamate + ADP + phosphate + 2 H(+). Allows the formation of correctly charged Asn-tRNA(Asn) or Gln-tRNA(Gln) through the transamidation of misacylated Asp-tRNA(Asn) or Glu-tRNA(Gln) in organisms which lack either or both of asparaginyl-tRNA or glutaminyl-tRNA synthetases. The reaction takes place in the presence of glutamine and ATP through an activated phospho-Asp-tRNA(Asn) or phospho-Glu-tRNA(Gln). This chain is Aspartyl/glutamyl-tRNA(Asn/Gln) amidotransferase subunit C, found in Streptococcus pneumoniae (strain Taiwan19F-14).